A 66-amino-acid chain; its full sequence is Large ribosomal subunit protein uL29 (66 aa).

This sequence belongs to the universal ribosomal protein uL29 family.

The chain is Large ribosomal subunit protein uL29 (rpmC) from Helicobacter pylori (strain J99 / ATCC 700824) (Campylobacter pylori J99).